A 229-amino-acid polypeptide reads, in one-letter code: Putative N-acetylmannosamine-6-phosphate 2-epimerase 2 (229 aa).

The protein belongs to the NanE family.

It catalyses the reaction an N-acyl-D-glucosamine 6-phosphate = an N-acyl-D-mannosamine 6-phosphate. It functions in the pathway amino-sugar metabolism; N-acetylneuraminate degradation; D-fructose 6-phosphate from N-acetylneuraminate: step 3/5. Its function is as follows. Converts N-acetylmannosamine-6-phosphate (ManNAc-6-P) to N-acetylglucosamine-6-phosphate (GlcNAc-6-P). The polypeptide is Putative N-acetylmannosamine-6-phosphate 2-epimerase 2 (nanE2) (Salmonella typhimurium (strain LT2 / SGSC1412 / ATCC 700720)).